Consider the following 375-residue polypeptide: Glycogen synthase kinase-3 homolog YGK3 (375 aa).

Residues 41 to 329 (VREGKRIGHG…ARQLMAHEFF (289 aa)) enclose the Protein kinase domain. Residues 47–55 (IGHGSFGTV) and K74 contribute to the ATP site. Catalysis depends on D173, which acts as the Proton acceptor. S211 carries the post-translational modification Phosphoserine.

This sequence belongs to the protein kinase superfamily. Ser/Thr protein kinase family.

The enzyme catalyses L-seryl-[protein] + ATP = O-phospho-L-seryl-[protein] + ADP + H(+). It carries out the reaction L-threonyl-[protein] + ATP = O-phospho-L-threonyl-[protein] + ADP + H(+). Its function is as follows. Required for heat stress-instigated phosphorylation of BCY1 which is involved in cell wall integrity signaling. Regulates activity of MSN2, a transcription factor that binds to the stress-response element (STRE). Probably promotes formation of a complex between MSN2 and DNA. Regulates the stability of ROG1. The polypeptide is Glycogen synthase kinase-3 homolog YGK3 (YGK3) (Saccharomyces cerevisiae (strain ATCC 204508 / S288c) (Baker's yeast)).